Consider the following 70-residue polypeptide: NADH dehydrogenase [ubiquinone] 1 alpha subcomplex subunit 1 (70 aa).

A helical membrane pass occupies residues 1–21 (MWFEILPGLSVMGVCLLIPGL).

Belongs to the complex I NDUFA1 subunit family. Complex I is composed of 45 different subunits. Primarily expressed in heart and skeletal muscle.

The protein resides in the mitochondrion inner membrane. Its function is as follows. Accessory subunit of the mitochondrial membrane respiratory chain NADH dehydrogenase (Complex I), that is believed not to be involved in catalysis. Complex I functions in the transfer of electrons from NADH to the respiratory chain. The immediate electron acceptor for the enzyme is believed to be ubiquinone. The protein is NADH dehydrogenase [ubiquinone] 1 alpha subcomplex subunit 1 (NDUFA1) of Homo sapiens (Human).